The chain runs to 238 residues: Probable transcriptional regulatory protein SMU_1789c (238 aa).

This sequence belongs to the TACO1 family. YeeN subfamily.

It is found in the cytoplasm. In Streptococcus mutans serotype c (strain ATCC 700610 / UA159), this protein is Probable transcriptional regulatory protein SMU_1789c.